The primary structure comprises 172 residues: Large ribosomal subunit protein uL5 (172 aa).

It belongs to the universal ribosomal protein uL5 family. In terms of assembly, part of the 50S ribosomal subunit; contacts the 5S rRNA and probably tRNA. Forms a bridge to the 30S subunit in the 70S ribosome.

In terms of biological role, this is one of the proteins that bind and probably mediate the attachment of the 5S RNA into the large ribosomal subunit, where it forms part of the central protuberance. In the 70S ribosome it contacts protein S13 of the 30S subunit (bridge B1b), connecting the 2 subunits; this bridge is implicated in subunit movement. May contact the P site tRNA; the 5S rRNA and some of its associated proteins might help stabilize positioning of ribosome-bound tRNAs. In Haloferax mediterranei (strain ATCC 33500 / DSM 1411 / JCM 8866 / NBRC 14739 / NCIMB 2177 / R-4) (Halobacterium mediterranei), this protein is Large ribosomal subunit protein uL5.